A 307-amino-acid polypeptide reads, in one-letter code: Taste receptor type 2 member 10 (307 aa).

Over 1–6 (MLRVVE) the chain is Extracellular. The chain crosses the membrane as a helical span at residues 7 to 27 (GIFIFVVISESVFGVLGNGFI). Residues 28-42 (GLVNCIDCAKNKLST) are Cytoplasmic-facing. Residues 43-63 (IGFILTGLAISRIFLIWIIIT) traverse the membrane as a helical segment. Topologically, residues 64–100 (DGFIQIFSPNIYASSNLIEYISYFWVIGNQSSMWFAT) are extracellular. A helical membrane pass occupies residues 101–121 (SLSIFYFLKIANFSNYIFLWL). At 122–126 (KSRTN) the chain is on the cytoplasmic side. Residues 127 to 147 (MVLPFMIVFLLISSLLNFAYI) traverse the membrane as a helical segment. Topologically, residues 148–179 (AKILNDYKMKNDTVWDLNMYKSEYFIKQILLN) are extracellular. N158 is a glycosylation site (N-linked (GlcNAc...) asparagine). Residues 180-200 (LGVIFFFTLSLITCVLLIISL) traverse the membrane as a helical segment. Residues 201–227 (WRHNRQMQSNVTGLRDSNTEAHVKAMK) lie on the Cytoplasmic side of the membrane. The helical transmembrane segment at 228-248 (VLISFIILFILYFIGMAIEIS) threads the bilayer. The Extracellular segment spans residues 249–257 (YFTVRENKL). A helical transmembrane segment spans residues 258–278 (LLMFGMTTTAIYPWGHSFILI). The Cytoplasmic portion of the chain corresponds to 279-307 (LGNSKLKQASLRVLQQLKCCEKRKNLRVT).

It belongs to the G-protein coupled receptor T2R family.

It localises to the membrane. Functionally, receptor that may play a role in the perception of bitterness and is gustducin-linked. May play a role in sensing the chemical composition of the gastrointestinal content. The activity of this receptor may stimulate alpha gustducin, mediate PLC-beta-2 activation and lead to the gating of TRPM5. The polypeptide is Taste receptor type 2 member 10 (TAS2R10) (Pan paniscus (Pygmy chimpanzee)).